The primary structure comprises 336 residues: 3-isopropylmalate dehydrogenase (336 aa).

Substrate-binding residues include arginine 87, arginine 97, arginine 121, and aspartate 211. Mg(2+)-binding residues include aspartate 211, aspartate 235, and aspartate 239. 271–283 (GSAPDIAGQGIAD) is a binding site for NAD(+).

Belongs to the isocitrate and isopropylmalate dehydrogenases family. LeuB type 2 subfamily. Homodimer. It depends on Mg(2+) as a cofactor. Mn(2+) is required as a cofactor.

The protein localises to the cytoplasm. It catalyses the reaction (2R,3S)-3-isopropylmalate + NAD(+) = 4-methyl-2-oxopentanoate + CO2 + NADH. Its pathway is amino-acid biosynthesis; L-leucine biosynthesis; L-leucine from 3-methyl-2-oxobutanoate: step 3/4. Its function is as follows. Catalyzes the oxidation of 3-carboxy-2-hydroxy-4-methylpentanoate (3-isopropylmalate) to 3-carboxy-4-methyl-2-oxopentanoate. The product decarboxylates to 4-methyl-2 oxopentanoate. The chain is 3-isopropylmalate dehydrogenase from Rhodococcus jostii (strain RHA1).